The following is a 492-amino-acid chain: MNRLPLRARVLSECFRSKSLDPVAVVEHSLAQIESHKHLNAFVRVSSEKALEQAKQSKDRHDANSPKSILDGVTIAVKDNFCTKGIHTTCASRMLQNFIPTYDATVVERLQAHGAVIVGKTNLDQFGMGSGCIDSIFGPTRNNWSEDTNDDRFRIAGGSSGGSAVAVAAGLCYAALGSDTGGSTRNPASYCGIVGLKPTYGLVSRHGLIPLVNSMDVPGIMTRTVDDCASMLNAVAGPDVYDSTTVKRPFESIAPLEKQMSLKGVRIGIPIEYHCDGLEKEVLETWTVIADMLESAGATVKAVSLPNTASSIFVYSILNQCEVASNMSRYDGIEYGHRSQEDSSTEQLYARTRAEGFNGVVKNRILSGNYFLLRENYDKYFQKALKVRRLIADDFVRAFKEVDVLLTPTTLSEAPLYKDFVQSNNRDQCAVQDFCTQPANMAGIPAISIPIRLSSRQLPISLQLMGDHFTERNLLQVANWIEKQVDFVANYS.

Active-site charge relay system residues include K78 and S159. S183 acts as the Acyl-ester intermediate in catalysis.

The protein belongs to the amidase family. GatA subfamily. As to quaternary structure, subunit of the heterotrimeric GatCAB amidotransferase (AdT) complex, composed of A, B and C subunits.

Its subcellular location is the mitochondrion. It carries out the reaction L-glutamyl-tRNA(Gln) + L-glutamine + ATP + H2O = L-glutaminyl-tRNA(Gln) + L-glutamate + ADP + phosphate + H(+). Functionally, allows the formation of correctly charged Gln-tRNA(Gln) through the transamidation of misacylated Glu-tRNA(Gln) in the mitochondria. The reaction takes place in the presence of glutamine and ATP through an activated gamma-phospho-Glu-tRNA(Gln). The sequence is that of Glutamyl-tRNA(Gln) amidotransferase subunit A, mitochondrial from Anopheles gambiae (African malaria mosquito).